Reading from the N-terminus, the 371-residue chain is Protein maelstrom 1 (371 aa).

The HMG box DNA-binding region spans 2–68 (AQNKPNAFMA…VLERESKTER (67 aa)).

This sequence belongs to the maelstrom family.

The protein resides in the cytoplasm. It is found in the nucleus. Involved both in the piRNA and miRNA metabolic processes. As a component of the meiotic nuage, plays a central role during oogenesis by repressing transposable elements and preventing their mobilization, which is essential for the germline integrity. Repression of transposable elements is mediated via the piRNA metabolic process, which mediates the repression of transposable elements during meiosis by forming complexes composed of piRNAs and Piwi proteins and governs the repression of transposons. As a nuclear component, it is required for proper differentiation in the germline stem cell (GSC) lineage by repressing microRNA-7 (miR-7), thereby acting as an indirect regulator of bag-of-marbles (Bam). Acts by binding to the promoter of miR-7 gene and repressing its expression; miR-7 repression alleviates the Bam repression by miR-7, thereby allowing differentiation in the germline stem cell (GSC) lineage. This chain is Protein maelstrom 1 (mael1), found in Drosophila pseudoobscura pseudoobscura (Fruit fly).